Consider the following 175-residue polypeptide: NADH dehydrogenase [ubiquinone] iron-sulfur protein 4, mitochondrial (175 aa).

The transit peptide at 1–42 (MAAVSISVSLRQAMLGRRAMATAAVSVCRVPSRLLSTSTWKL) directs the protein to the mitochondrion. The residue at position 173 (S173) is a Phosphoserine.

It belongs to the complex I NDUFS4 subunit family. As to quaternary structure, this is a component of the iron-sulfur (IP) fragment of the enzyme. Interacts with BCAP31 and TOMM40; the interaction mediates its translocation to the mitochondria; the interaction with BCAP31 is direct.

The protein localises to the mitochondrion inner membrane. Functionally, accessory subunit of the mitochondrial membrane respiratory chain NADH dehydrogenase (Complex I), that is believed not to be involved in catalysis. Complex I functions in the transfer of electrons from NADH to the respiratory chain. The immediate electron acceptor for the enzyme is believed to be ubiquinone. In Mus musculus (Mouse), this protein is NADH dehydrogenase [ubiquinone] iron-sulfur protein 4, mitochondrial (Ndufs4).